A 219-amino-acid chain; its full sequence is Outer spore wall protein 4 (219 aa).

The N-terminal stretch at 1–19 (MRFQLFIYFYFTIVVIAGT) is a signal peptide. Over 20-170 (NTIQQFSDAG…KKKRLDRIKR (151 aa)) the chain is Extracellular. N-linked (GlcNAc...) asparagine glycans are attached at residues Asn42, Asn62, and Asn136. A helical membrane pass occupies residues 171–191 (ILTVSLLELGLAQGVADLCAV). The Cytoplasmic portion of the chain corresponds to 192-193 (AP). Residues 194 to 214 (FACLLGVTVGSIGFIFWLALI) traverse the membrane as a helical segment. The Extracellular portion of the chain corresponds to 215–219 (YNAIQ).

It belongs to the OSW4/6 family. Post-translationally, N-glycosylated.

It is found in the membrane. Functionally, involved in spore wall assembly. May be involved in maintaining genome integrity. The polypeptide is Outer spore wall protein 4 (Saccharomyces cerevisiae (strain ATCC 204508 / S288c) (Baker's yeast)).